The following is a 92-amino-acid chain: Small ribosomal subunit protein uS19 (92 aa).

Belongs to the universal ribosomal protein uS19 family.

Its function is as follows. Protein S19 forms a complex with S13 that binds strongly to the 16S ribosomal RNA. This chain is Small ribosomal subunit protein uS19, found in Shigella boydii serotype 18 (strain CDC 3083-94 / BS512).